Here is an 884-residue protein sequence, read N- to C-terminus: Chondroitin sulfate synthase 3 (884 aa).

The Cytoplasmic segment spans residues 1 to 7; that stretch reads MAVRSRR. The chain crosses the membrane as a helical; Signal-anchor for type II membrane protein span at residues 8-28; it reads PWVSVALGLVLGFTAASWLIA. At 29-884 the chain is on the lumenal side; the sequence is PRVAELSEKR…LGVRDNRTLS (856 aa). A disordered region spans residues 47 to 164; that stretch reads YYGRSATGPR…NGSGDGGAAV (118 aa). Composition is skewed to low complexity over residues 60–69 and 84–96; these read QQLLPQPQSR and PGPQ…PGGP. 2 N-linked (GlcNAc...) asparagine glycosylation sites follow: asparagine 155 and asparagine 281. A disordered region spans residues 437–456; the sequence is SNSEVSKEDQQLGRTPSFNH. Asparagine 712 is a glycosylation site (N-linked (GlcNAc...) asparagine). A divalent metal cation-binding residues include aspartate 722 and histidine 836. Asparagine 880 is a glycosylation site (N-linked (GlcNAc...) asparagine).

It belongs to the chondroitin N-acetylgalactosaminyltransferase family. Co(2+) is required as a cofactor. The cofactor is Mn(2+). Cd(2+) serves as cofactor.

Its subcellular location is the golgi apparatus. It localises to the golgi stack membrane. The enzyme catalyses 3-O-(beta-D-GlcA-(1-&gt;3)-beta-D-GalNAc-(1-&gt;4)-beta-D-GlcA-(1-&gt;3)-beta-D-Gal-(1-&gt;3)-beta-D-Gal-(1-&gt;4)-beta-D-Xyl)-L-seryl-[protein] + UDP-N-acetyl-alpha-D-galactosamine = 3-O-(beta-D-GalNAc-(1-&gt;4)-beta-D-GlcA-(1-&gt;3)-beta-D-GalNAc-(1-&gt;4)-beta-D-GlcA-(1-&gt;3)-beta-D-Gal-(1-&gt;3)-beta-D-Gal-(1-&gt;4)-beta-D-Xyl)-L-seryl-[protein] + UDP + H(+). It carries out the reaction 3-O-{beta-D-GlcA-(1-&gt;3)-[beta-D-GalNAc-(1-&gt;4)-beta-D-GlcA-(1-&gt;3)](n)-beta-D-GalNAc-(1-&gt;4)-beta-D-GlcA-(1-&gt;3)-beta-D-Gal-(1-&gt;3)-beta-D-Gal-(1-&gt;4)-beta-D-Xyl}-L-seryl-[protein] + UDP-N-acetyl-alpha-D-galactosamine = 3-O-{[beta-D-GalNAc-(1-&gt;4)-beta-D-GlcA-(1-&gt;3)](n+1)-beta-D-GalNAc-(1-&gt;4)-beta-D-GlcA-(1-&gt;3)-beta-D-Gal-(1-&gt;3)-beta-D-Gal-(1-&gt;4)-beta-D-Xyl}-L-seryl-[protein] + UDP + H(+). It catalyses the reaction 3-O-(beta-D-GalNAc-(1-&gt;4)-beta-D-GlcA-(1-&gt;3)-beta-D-Gal-(1-&gt;3)-beta-D-Gal-(1-&gt;4)-beta-D-Xyl)-L-seryl-[protein] + UDP-alpha-D-glucuronate = 3-O-(beta-D-GlcA-(1-&gt;3)-beta-D-GalNAc-(1-&gt;4)-beta-D-GlcA-(1-&gt;3)-beta-D-Gal-(1-&gt;3)-beta-D-Gal-(1-&gt;4)-beta-D-Xyl)-L-seryl-[protein] + UDP + H(+). The catalysed reaction is 3-O-{[beta-D-GalNAc-(1-&gt;4)-beta-D-GlcA-(1-&gt;3)](n)-beta-D-GalNAc-(1-&gt;4)-beta-D-GlcA-(1-&gt;3)-beta-D-Gal-(1-&gt;3)-beta-D-Gal-(1-&gt;4)-beta-D-Xyl}-L-seryl-[protein] + UDP-alpha-D-glucuronate = 3-O-{beta-D-GlcA-(1-&gt;3)-[beta-D-GalNAc-(1-&gt;4)-beta-D-GlcA-(1-&gt;3)](n)-beta-D-GalNAc-(1-&gt;4)-beta-D-GlcA-(1-&gt;3)-beta-D-Gal-(1-&gt;3)-beta-D-Gal-(1-&gt;4)-beta-D-Xyl}-L-seryl-[protein] + UDP + H(+). Its function is as follows. Has both beta-1,3-glucuronic acid and beta-1,4-N-acetylgalactosamine transferase activity. Transfers glucuronic acid (GlcUA) from UDP-GlcUA and N-acetylgalactosamine (GalNAc) from UDP-GalNAc to the non-reducing end of the elongating chondroitin polymer. Specific activity is much reduced compared to CHSY1. This chain is Chondroitin sulfate synthase 3 (Chsy3), found in Mus musculus (Mouse).